A 2832-amino-acid polypeptide reads, in one-letter code: Cyclic beta-(1,2)-glucan synthase NdvB (2832 aa).

The next 7 helical transmembrane spans lie at 411-431 (FAIA…VYAF), 444-464 (IMLL…FNTV), 810-830 (LIPV…EPTP), 831-851 (ALIW…LSLI), 880-900 (QVAL…DAIV), 938-958 (WTAP…DTGL), and 959-979 (PFIG…AWFV). Residues 1299-1506 (LASEARLTSL…NGQLREWFHA (208 aa)) enclose the Glycoamylase-like domain.

It belongs to the NdvB family.

It is found in the cell inner membrane. It carries out the reaction [(1-&gt;2)-beta-D-glucosyl](n) + UDP-alpha-D-glucose = [(1-&gt;2)-beta-D-glucosyl](n+1) + UDP + H(+). In terms of biological role, involved in the biosynthesis of cyclic beta-(1,2)-glucan. It seems that NdvB is involved in three enzymatic activities. First, it may catalyze the transfer of the first glucose from UDP-Glc to an unknown amino acid. In the second enzymatic activity (UDP-Glc:beta-(1,2) oligosaccharide glucosyltransferase), it may be responsible for chain elongation. Finally, in the third activity, it may catalyze glucan cyclization and release from the protein. NdvB is also involved in nodule invasion and in bacteroid development. The sequence is that of Cyclic beta-(1,2)-glucan synthase NdvB from Rhizobium meliloti (strain 1021) (Ensifer meliloti).